The chain runs to 474 residues: Protein NAR1 (474 aa).

Cys-24, Cys-61, Cys-64, Cys-67, Cys-177, Cys-233, Cys-390, and Cys-394 together coordinate [4Fe-4S] cluster.

The protein belongs to the NARF family. Part of a complex composed of AE7, CIA1, MMS19 and NAR1. Interacts with CIA1. As to expression, expressed in developing tissues, including shoot apex, young leaves, vascular tissues, root tips, pedicels, carpels and developing seeds.

It is found in the nucleus. The protein localises to the cytoplasm. In terms of biological role, essential component of the cytosolic iron-sulfur (Fe-S) protein assembly (CIA) machinery. Required for the maturation of extramitochondrial Fe/S proteins. Required for expression of the imprinted FWA gene, for seed development and is involved in the oxidative stress response in vegetative tissues. Involved in the regulation of cell size, ploidy and cell cycle progression. Required for growth under normoxic conditions and necessary for recovery after hypoxic treatment but its action is reactive oxygen species (ROS) independent. This chain is Protein NAR1, found in Arabidopsis thaliana (Mouse-ear cress).